We begin with the raw amino-acid sequence, 353 residues long: Photosystem II protein D1 (353 aa).

Residue T2 is modified to N-acetylthreonine. T2 carries the phosphothreonine modification. 3 consecutive transmembrane segments (helical) span residues 29–46 (NIGW…TATS), 118–133 (HFLL…EWEL), and 142–156 (WIAV…AATA). Residue H118 coordinates chlorophyll a. Y126 lines the pheophytin a pocket. [CaMn4O5] cluster-binding residues include D170 and E189. Residues 197-218 (FHMLGVAGVFGGSLFSAMHGSL) form a helical membrane-spanning segment. A chlorophyll a-binding site is contributed by H198. Residues H215 and 264–265 (SF) each bind a quinone. H215 is a binding site for Fe cation. H272 provides a ligand contact to Fe cation. Residues 274–288 (FLAAWPVVGIWFTAL) form a helical membrane-spanning segment. Positions 332, 333, 342, and 344 each coordinate [CaMn4O5] cluster. A propeptide spanning residues 345–353 (AVEAPAVNG) is cleaved from the precursor.

It belongs to the reaction center PufL/M/PsbA/D family. PSII is composed of 1 copy each of membrane proteins PsbA, PsbB, PsbC, PsbD, PsbE, PsbF, PsbH, PsbI, PsbJ, PsbK, PsbL, PsbM, PsbT, PsbX, PsbY, PsbZ, Psb30/Ycf12, at least 3 peripheral proteins of the oxygen-evolving complex and a large number of cofactors. It forms dimeric complexes. The D1/D2 heterodimer binds P680, chlorophylls that are the primary electron donor of PSII, and subsequent electron acceptors. It shares a non-heme iron and each subunit binds pheophytin, quinone, additional chlorophylls, carotenoids and lipids. D1 provides most of the ligands for the Mn4-Ca-O5 cluster of the oxygen-evolving complex (OEC). There is also a Cl(-1) ion associated with D1 and D2, which is required for oxygen evolution. The PSII complex binds additional chlorophylls, carotenoids and specific lipids. is required as a cofactor. Tyr-161 forms a radical intermediate that is referred to as redox-active TyrZ, YZ or Y-Z. In terms of processing, C-terminally processed by CTPA; processing is essential to allow assembly of the oxygen-evolving complex and thus photosynthetic growth.

The protein resides in the plastid. Its subcellular location is the chloroplast thylakoid membrane. The catalysed reaction is 2 a plastoquinone + 4 hnu + 2 H2O = 2 a plastoquinol + O2. In terms of biological role, photosystem II (PSII) is a light-driven water:plastoquinone oxidoreductase that uses light energy to abstract electrons from H(2)O, generating O(2) and a proton gradient subsequently used for ATP formation. It consists of a core antenna complex that captures photons, and an electron transfer chain that converts photonic excitation into a charge separation. The D1/D2 (PsbA/PsbD) reaction center heterodimer binds P680, the primary electron donor of PSII as well as several subsequent electron acceptors. This chain is Photosystem II protein D1, found in Dumortiera hirsuta (Liverwort).